The following is a 440-amino-acid chain: UPF0489 protein C5orf22 homolog (440 aa).

The interval 187 to 207 (VEGSSSGIQSSTSESSEDGLM) is disordered. A compositionally biased stretch (low complexity) spans 188–200 (EGSSSGIQSSTSE).

It belongs to the UPF0489 family.

The protein is UPF0489 protein C5orf22 homolog of Xenopus tropicalis (Western clawed frog).